Reading from the N-terminus, the 636-residue chain is Ketocytochalasin monooxygenase (636 aa).

Residues Asp125, 133–136 (TWYW), Asp145, Tyr151, and Ile195 each bind FAD. Position 143-145 (143-145 (ACD)) interacts with NADP(+). NADP(+)-binding positions include 279–285 (TGASAVQ), 302–303 (RT), and 420–421 (KR). FAD is bound at residue Trp534.

This sequence belongs to the FAD-binding monooxygenase family. The cofactor is FAD.

It carries out the reaction ketocytochalasin + NADPH + O2 + H(+) = iso-precytochalasin + NADP(+) + H2O. The enzyme catalyses iso-precytochalasin + NADPH + O2 + H(+) = cytochalasin Z16 + NADP(+) + H2O. The protein operates within mycotoxin biosynthesis. In terms of biological role, ketocytochalasin monooxygenase; part of the gene cluster that mediates the biosynthesis of a family of the mycotoxins cytochalasins E and K. The hybrid PKS-NRPS synthetase ccsA and the enoyl reductase ccsC are responsible for fusion of phenylalanine with an octaketide backbone and subsequent release of the stable tetramic acid precursor. The polyketide synthase module (PKS) of the PKS-NRPS ccsA is responsible for the synthesis of the octaketide backbone. The downstream nonribosomal peptide synthetase (NRPS) amidates the carboxyl end of the octaketide with a phenylalanine. A reductase-like domain (R) at the C-terminus catalyzes the reductive release of the polyketide-amino acid intermediate. Because ccsA lacks a designated enoylreductase (ER) domain, the required activity is provided the enoyl reductase ccsC. Upon formation of the 11-membered carbocycle-fused perhydroisoindolone intermediate, a number of oxidative steps are required to afford the final cytochalasin E and K, including two hydroxylations at C17 and C18, one alcohol oxidation at C17, one epoxidation at C6 and C7 and two Baeyer-Villiger oxidations. The oxidative modification at C17, C18 and the C6-C7 epoxidation are likely to be catalyzed by the two cytochrome P450 oxygenases ccsD and ccsG. CcsD may be responsible for the epoxidation of the C6-C7 double bond. CcsG may be responsible for the successive oxidative modifications at C17 and C18. The double Baeyer-Villiger oxidations of ketocytochalasin to precytochalasin and cytochalasin Z(16) are among the final steps leading to cytochalasin E and K and are catalyzed by ccsB. The first oxygen insertion step follows that of the classic BVMO mechanism, generating the ester precytochalasin. Release of precytochalasin into an aqueous environment can generate the shunt product iso-precytochalasin through spontaneous isomerization. Alternatively, precytochalasin can undergo further oxidation by ccsB to yield the in-line carbonate-containing cytochalasin Z(16). Cytochalasin Z(16) is a precursor to cytochalasin E and cytochalasin K, whereas iso-precytochalasin is a precursor to cytochalasin Z(17) and rosellichalasin. The hydrolyase ccsE may catalyze hydrolysis of epoxide bond in cytochalasin E to afford cytochalasin K. The function of ccsF has not been assigned but it may play a role in post-PKS-NRPS biosynthetic step, resistance or transport of cytochalasins and related PKS-NRPS products. This chain is Ketocytochalasin monooxygenase, found in Aspergillus clavatus (strain ATCC 1007 / CBS 513.65 / DSM 816 / NCTC 3887 / NRRL 1 / QM 1276 / 107).